The sequence spans 713 residues: Probable glutamate carboxypeptidase VP8 (713 aa).

The Cytoplasmic segment spans residues 1–10 (MPHSVLARLP). A helical; Signal-anchor for type II membrane protein transmembrane segment spans residues 11 to 31 (PGSVRLVAAFGLLLLVSLLVL). Topologically, residues 32 to 713 (HRRPGRPHVA…PTNFSSLVTP (682 aa)) are extracellular. Asparagine 66 and asparagine 311 each carry an N-linked (GlcNAc...) asparagine glycan. The segment at 245-539 (ATSGAERLKF…EIWGLLALRL (295 aa)) is catalytic. Zn(2+) contacts are provided by histidine 345 and aspartate 355. Residue glutamate 392 is the Nucleophile of the active site. Zn(2+) contacts are provided by glutamate 393, aspartate 421, and histidine 505. Asparagine 667 and asparagine 706 each carry an N-linked (GlcNAc...) asparagine glycan.

It belongs to the peptidase M28 family. M28B subfamily. The cofactor is Zn(2+).

It localises to the cell membrane. The enzyme catalyses Release of an unsubstituted, C-terminal glutamyl residue, typically from Ac-Asp-Glu or folylpoly-gamma-glutamates.. In terms of biological role, involved in the regulation of meristem development and seed maturation processes. Mediates regulation of embryonic regulatory genes and genes controlling abscisic acid (ABA) biosynthesis and turnover in developing seeds. May be required for the synthesis of small signaling molecules that integrates meristem and embryo formation in seeds. In Zea mays (Maize), this protein is Probable glutamate carboxypeptidase VP8.